The chain runs to 380 residues: Cytochrome b (380 aa).

4 consecutive transmembrane segments (helical) span residues 33–53 (FGSL…FLAM), 77–98 (WFIR…YIHV), 113–133 (WNVG…GYVL), and 178–198 (FFAF…VHLL). Heme b is bound by residues His-83 and His-97. The heme b site is built by His-182 and His-196. His-201 contributes to the a ubiquinone binding site. The next 4 membrane-spanning stretches (helical) occupy residues 226 to 246 (TKDI…VLFA), 288 to 308 (LGGV…PYLY), 320 to 340 (LTQL…WIGA), and 347 to 367 (FITI…ILMP).

This sequence belongs to the cytochrome b family. In terms of assembly, the cytochrome bc1 complex contains 11 subunits: 3 respiratory subunits (MT-CYB, CYC1 and UQCRFS1), 2 core proteins (UQCRC1 and UQCRC2) and 6 low-molecular weight proteins (UQCRH/QCR6, UQCRB/QCR7, UQCRQ/QCR8, UQCR10/QCR9, UQCR11/QCR10 and a cleavage product of UQCRFS1). This cytochrome bc1 complex then forms a dimer. It depends on heme b as a cofactor.

The protein resides in the mitochondrion inner membrane. In terms of biological role, component of the ubiquinol-cytochrome c reductase complex (complex III or cytochrome b-c1 complex) that is part of the mitochondrial respiratory chain. The b-c1 complex mediates electron transfer from ubiquinol to cytochrome c. Contributes to the generation of a proton gradient across the mitochondrial membrane that is then used for ATP synthesis. The chain is Cytochrome b (MT-CYB) from Cricetomys emini (Emin's giant pouched rat).